A 340-amino-acid polypeptide reads, in one-letter code: UDP-3-O-acylglucosamine N-acyltransferase (340 aa).

Catalysis depends on H238, which acts as the Proton acceptor.

Belongs to the transferase hexapeptide repeat family. LpxD subfamily. Homotrimer.

It carries out the reaction a UDP-3-O-[(3R)-3-hydroxyacyl]-alpha-D-glucosamine + a (3R)-hydroxyacyl-[ACP] = a UDP-2-N,3-O-bis[(3R)-3-hydroxyacyl]-alpha-D-glucosamine + holo-[ACP] + H(+). The protein operates within bacterial outer membrane biogenesis; LPS lipid A biosynthesis. In terms of biological role, catalyzes the N-acylation of UDP-3-O-acylglucosamine using 3-hydroxyacyl-ACP as the acyl donor. Is involved in the biosynthesis of lipid A, a phosphorylated glycolipid that anchors the lipopolysaccharide to the outer membrane of the cell. This Psychromonas ingrahamii (strain DSM 17664 / CCUG 51855 / 37) protein is UDP-3-O-acylglucosamine N-acyltransferase.